A 189-amino-acid chain; its full sequence is Transcriptional repressor NrdR (189 aa).

The segment at 3-34 (CPFCRGDDSRVVDSREVEDGQAIRRRRSCSGC) is a zinc-finger region. Residues 46–136 (LSVVKRSGVT…VYRAFSSVED (91 aa)) form the ATP-cone domain. Residues 152–189 (RLPEGPEAAQGGPESKAGNGQAAGSGDPEGVKAEKSSE) are disordered. Over residues 180–189 (EGVKAEKSSE) the composition is skewed to basic and acidic residues.

It belongs to the NrdR family. The cofactor is Zn(2+).

Its function is as follows. Negatively regulates transcription of bacterial ribonucleotide reductase nrd genes and operons by binding to NrdR-boxes. The protein is Transcriptional repressor NrdR of Saccharopolyspora erythraea (strain ATCC 11635 / DSM 40517 / JCM 4748 / NBRC 13426 / NCIMB 8594 / NRRL 2338).